We begin with the raw amino-acid sequence, 364 residues long: Flavonoid 3'-O-methyltransferase 3 (364 aa).

Residue D232 participates in S-adenosyl-L-methionine binding. The active-site Proton acceptor is the H270.

It belongs to the class I-like SAM-binding methyltransferase superfamily. Cation-independent O-methyltransferase family. Homodimer.

It catalyses the reaction quercetin + S-adenosyl-L-methionine = isorhamnetin + S-adenosyl-L-homocysteine + H(+). The enzyme catalyses luteolin + S-adenosyl-L-methionine = chrysoeriol + S-adenosyl-L-homocysteine + H(+). The catalysed reaction is a 3'-hydroxyflavone + S-adenosyl-L-methionine = a 3'-methoxyflavone + S-adenosyl-L-homocysteine + H(+). It carries out the reaction rhamnetin + S-adenosyl-L-methionine = rhamnacene + S-adenosyl-L-homocysteine + H(+). It catalyses the reaction 3',4',7,8-tetrahydroxyflavone + S-adenosyl-L-methionine = 4',7,8-trihydroxy-3'-methoxyflavone-7-olate + S-adenosyl-L-homocysteine + H(+). The enzyme catalyses taxifolin + S-adenosyl-L-methionine = taxifolin 3'-methyl ether + S-adenosyl-L-homocysteine + H(+). It functions in the pathway flavonoid metabolism. Its function is as follows. Flavonoid 3'-O-methyltransferase involved in the biosynthesis of polymethoxylated flavonoids natural products such as pebrellin, aroma compounds which contribute to the flavor of peppermint, and exhibit pharmacological activities such as anti-allergic, anti-oxidant, antibacterial, anti-proliferative, and anti-inflammatory effects. Catalyzes S-adenosylmethionine-dependent regioselective 3'-O-methylation of flavonoids; active on various hydroxylated flavonoid substrates, including quercetin, rhamnetin, luteolin (LUT), 7,8,3'4'-tetrahydroxy-flavone and taxifolin, and, with a lower efficiency, eupatorin and hesperetin. The protein is Flavonoid 3'-O-methyltransferase 3 of Mentha piperita (Peppermint).